Here is a 1258-residue protein sequence, read N- to C-terminus: Structural polyprotein (1258 aa).

Positions P41–P75 are host transcription inhibition. A disordered region spans residues R59 to R114. The short motif at Q68–P109 is the Nuclear localization signal element. 2 stretches are compositionally biased toward basic residues: residues Q69–P84 and T93–R114. The binding to the viral RNA stretch occupies residues K96–I124. The interval P109–C123 is ribosome-binding. Cysteines 123 and 138 form a disulfide. The 149-residue stretch at C123–W271 folds into the Peptidase S3 domain. The active-site Charge relay system is the H149. The Nuclear export signal motif lies at I154–F164. The interaction with spike glycoprotein E2 stretch occupies residues K165–Y170. D171 functions as the Charge relay system in the catalytic mechanism. Positions P193–A203 are dimerization of the capsid protein. S223 functions as the Charge relay system in the catalytic mechanism. Residues D229 to R233 form a dimerization of the capsid protein region. Residues T272–L284 form a functions as an uncleaved signal peptide for the precursor of protein E3/E2 region. 9 disulfides stabilise this stretch: C279-C288, C293-C297, C296-C328, C356-C462, C359-C365, C428-C442, C490-C601, C538-C562, and C540-C557. N-linked (GlcNAc...) asparagine; by host glycosylation occurs at N283. The Extracellular segment spans residues G338 to G696. Interaction with host Mxra8 receptor regions lie at residues Q363–Y366 and H399–W401. Positions T521–K524 are interaction with host Mxra8 receptor. N537 is a glycosylation site (N-linked (GlcNAc...) asparagine; by host). An interaction with host Mxra8 receptor region spans residues E553–V559. The N-linked (GlcNAc...) asparagine; by host glycan is linked to N598. A helical transmembrane segment spans residues L697–L717. Residues S718–A758 lie on the Cytoplasmic side of the membrane. The interaction with the capsid protein stretch occupies residues S726–K730. 3 S-palmitoyl cysteine; by host lipidation sites follow: C731, C751, and C752. The interval C731–C751 is transient transmembrane before p62-6K protein processing. The cysteines at positions 731 and 752 are disulfide-linked. The Extracellular segment spans residues A759–Q773. The chain crosses the membrane as a helical span at residues T774–L794. The Cytoplasmic segment spans residues R795–H796. Residues L797–T817 traverse the membrane as a helical segment. Extracellular-side segments run Q818–A819 and Y820–G1234. 4 disulfide bridges follow: C868/C933, C881/C913, C882/C915, and C887/C897. Positions V903–T920 are E1 fusion peptide loop. 2 N-linked (GlcNAc...) asparagine; by host glycosylation sites follow: N960 and N1089. Disulfide bonds link C1078–C1090, C1120–C1195, C1125–C1199, and C1147–C1189. Residues G1235–F1255 traverse the membrane as a helical segment. C1252 carries the S-palmitoyl cysteine; by host lipid modification. Topologically, residues S1256–H1258 are cytoplasmic.

Homodimer. Homomultimer. Interacts with host karyopherin KPNA4; this interaction allows the nuclear import of the viral capsid protein. Interacts with spike glycoprotein E2. Interacts with host IRAK1; the interaction leads to inhibition of IRAK1-dependent signaling. As to quaternary structure, the precursor of protein E3/E2 and E1 form a heterodimer shortly after synthesis. In terms of assembly, the precursor of protein E3/E2 and E1 form a heterodimer shortly after synthesis. Processing of the precursor of protein E3/E2 into E2 and E3 results in a heterodimer of the spike glycoproteins E2 and E1. Spike at virion surface are constituted of a trimer of E2-E1 heterodimers. After target cell attachment and endocytosis, E1 change conformation to form homotrimers. Interacts with 6K protein. Interacts with spike glycoprotein E1. Processing of the precursor of protein E3/E2 into E2 and E3 results in a heterodimer of the spike glycoproteins E2 and E1. Spike at virion surface are constituted of a trimer of E2-E1 heterodimers. Interacts with 6K protein. Interacts with host MXRA8; this interaction mediates virus entry. As to quaternary structure, oligomer. Interacts with spike glycoprotein E1. Interacts with spike glycoprotein E2. Structural polyprotein: Specific enzymatic cleavages in vivo yield mature proteins. Capsid protein is auto-cleaved during polyprotein translation, unmasking a signal peptide at the N-terminus of the precursor of E3/E2. The remaining polyprotein is then targeted to the host endoplasmic reticulum, where host signal peptidase cleaves it into pE2, 6K and E1 proteins. pE2 is further processed to mature E3 and E2 by host furin in trans-Golgi vesicle. Post-translationally, palmitoylated via thioester bonds. These palmitoylations may induce disruption of the C-terminus transmembrane. This would result in the reorientation of E2 C-terminus from lumenal to cytoplasmic side. In terms of processing, N-glycosylated. Palmitoylated via thioester bonds.

Its subcellular location is the virion. It localises to the host cytoplasm. The protein resides in the host cell membrane. It is found in the host nucleus. The protein localises to the virion membrane. Its subcellular location is the host Golgi apparatus. It localises to the host trans-Golgi network. The protein resides in the host endoplasmic reticulum. The enzyme catalyses Autocatalytic release of the core protein from the N-terminus of the togavirus structural polyprotein by hydrolysis of a -Trp-|-Ser- bond.. Forms an icosahedral capsid with a T=4 symmetry composed of 240 copies of the capsid protein surrounded by a lipid membrane through which penetrate 80 spikes composed of trimers of E1-E2 heterodimers. The capsid protein binds to the viral RNA genome at a site adjacent to a ribosome binding site for viral genome translation following genome release. Possesses a protease activity that results in its autocatalytic cleavage from the nascent structural protein. Following its self-cleavage, the capsid protein transiently associates with ribosomes, and within several minutes the protein binds to viral RNA and rapidly assembles into icosahedric core particles. The resulting nucleocapsid eventually associates with the cytoplasmic domain of the spike glycoprotein E2 at the cell membrane, leading to budding and formation of mature virions. In case of infection, new virions attach to target cells and after clathrin-mediated endocytosis their membrane fuses with the host endosomal membrane. This leads to the release of the nucleocapsid into the cytoplasm, followed by an uncoating event necessary for the genomic RNA to become accessible. The uncoating might be triggered by the interaction of capsid proteins with ribosomes. Binding of ribosomes would release the genomic RNA since the same region is genomic RNA-binding and ribosome-binding. Specifically inhibits interleukin-1 receptor-associated kinase 1/IRAK1-dependent signaling during viral entry, representing a means by which the alphaviruses may evade innate immune detection and activation prior to viral gene expression. Its function is as follows. Provides the signal sequence for the translocation of the precursor of protein E3/E2 to the host endoplasmic reticulum. Furin-cleaved E3 remains associated with spike glycoprotein E1 and mediates pH protection of the latter during the transport via the secretory pathway. After virion release from the host cell, the assembly protein E3 is gradually released in the extracellular space. Functionally, plays a role in viral attachment to target host cell, by binding to the cell receptor MXRA8. Synthesized as a p62 precursor which is processed by furin at the cell membrane just before virion budding, giving rise to E2-E1 heterodimer. The p62-E1 heterodimer is stable, whereas E2-E1 is unstable and dissociate at low pH. p62 is processed at the last step, presumably to avoid E1 fusion activation before its final export to cell surface. E2 C-terminus contains a transitory transmembrane that would be disrupted by palmitoylation, resulting in reorientation of the C-terminal tail from lumenal to cytoplasmic side. This step is critical since E2 C-terminus is involved in budding by interacting with capsid proteins. This release of E2 C-terminus in cytoplasm occurs lately in protein export, and precludes premature assembly of particles at the endoplasmic reticulum membrane. In terms of biological role, acts as a viroporin that participates in virus glycoprotein processing and transport to the plasma membrane, cell permeabilization and budding of viral particles. Disrupts the calcium homeostasis of the cell, probably at the endoplasmic reticulum level. This leads to cytoplasmic calcium elevation. Because of its lipophilic properties, the 6K protein is postulated to influence the selection of lipids that interact with the transmembrane domains of the glycoproteins, which, in turn, affects the deformability of the bilayer required for the extreme curvature that occurs as budding proceeds. Present in low amount in virions, about 3% compared to viral glycoproteins. Class II viral fusion protein. Fusion activity is inactive as long as E1 is bound to E2 in mature virion. After virus attachment to target cell and endocytosis, acidification of the endosome induce dissociation of E1/E2 heterodimer and concomitant trimerization of the E1 subunits. This E1 trimer is fusion active, and promotes release of viral nucleocapsid in cytoplasm after endosome and viral membrane fusion. Efficient fusion requires the presence of cholesterol and sphingolipid in the target membrane. The protein is Structural polyprotein of Middelburg virus.